Reading from the N-terminus, the 146-residue chain is Large ribosomal subunit protein uL15 (146 aa).

Residues 1 to 42 are disordered; sequence MTIKLHDLQPARGSKTTRTRVGRGEASKGKTAGRGTKGTKAR.

This sequence belongs to the universal ribosomal protein uL15 family. In terms of assembly, part of the 50S ribosomal subunit.

Functionally, binds to the 23S rRNA. In Mycobacterium leprae (strain Br4923), this protein is Large ribosomal subunit protein uL15.